Reading from the N-terminus, the 142-residue chain is Two-component response regulator ARR22 (142 aa).

The Response regulatory domain occupies Asn-23 to Phe-140. Position 74 is a 4-aspartylphosphate (Asp-74).

This sequence belongs to the ARR family. Type-A subfamily. Post-translationally, two-component system major event consists of a His-to-Asp phosphorelay between a sensor histidine kinase (HK) and a response regulator (RR). In plants, the His-to-Asp phosphorelay involves an additional intermediate named Histidine-containing phosphotransfer protein (HPt). This multistep phosphorelay consists of a His-Asp-His-Asp sequential transfer of a phosphate group between first a His and an Asp of the HK protein, followed by the transfer to a conserved His of the HPt protein and finally the transfer to an Asp in the receiver domain of the RR protein.

It is found in the nucleus. In terms of biological role, functions as a response regulator involved in His-to-Asp phosphorelay signal transduction system. Phosphorylation of the Asp residue in the receiver domain activates the ability of the protein to promote the transcription of target genes. Type-A response regulators seem to act as negative regulators of the cytokinin signaling. The protein is Two-component response regulator ARR22 (ARR22) of Arabidopsis thaliana (Mouse-ear cress).